The primary structure comprises 261 residues: 5-oxoprolinase subunit A (261 aa).

The protein belongs to the LamB/PxpA family. Forms a complex composed of PxpA, PxpB and PxpC.

The enzyme catalyses 5-oxo-L-proline + ATP + 2 H2O = L-glutamate + ADP + phosphate + H(+). Its function is as follows. Catalyzes the cleavage of 5-oxoproline to form L-glutamate coupled to the hydrolysis of ATP to ADP and inorganic phosphate. This chain is 5-oxoprolinase subunit A, found in Symbiobacterium thermophilum (strain DSM 24528 / JCM 14929 / IAM 14863 / T).